Reading from the N-terminus, the 545-residue chain is Carboxypeptidase N subunit 2 (545 aa).

Residues 1-21 form the signal peptide; it reads MLPGAWLLWTSLLLLARPAQP. An LRRNT domain is found at 22–49; the sequence is CPMGCDCFVQEVFCSDEELATVPLDIPP. N-linked (GlcNAc...) asparagine glycans are attached at residues N74, N111, and N119. LRR repeat units follow at residues 98 to 119, 122 to 143, 146 to 167, 170 to 191, 194 to 215, 218 to 239, 242 to 263, 266 to 287, 290 to 311, 314 to 335, 338 to 359, and 362 to 383; these read RLED…IFSN, SLGK…LFQH, ALES…LFQP, HLKT…LFHP, SLQT…VFGK, SLQE…VFSQ, CLER…IFAS, NLTF…LFAH, CLVG…TFAH, NLRS…IFRD, ELVK…LFQN, and KLEL…IFDT. Residue N228 is glycosylated (N-linked (GlcNAc...) asparagine). N-linked (GlcNAc...) asparagine glycosylation occurs at N266. N-linked (GlcNAc...) asparagine glycans are attached at residues N348 and N359. The region spanning 395–447 is the LRRCT domain; that stretch reads NPWQCDCHLAYLFNWLQQYTDRLLNIQTYCAGPAYLKGQVVPALNEKQLVCPV. The N-linked (GlcNAc...) asparagine glycan is linked to N518.

Tetramer of two catalytic chains and two glycosylated inactive chains. Whether or not any Cys residues participate in intrachain bonds is unknown, but they do not form interchain disulfide bonds with the 50 kDa catalytic subunit.

The protein localises to the secreted. Its function is as follows. The 83 kDa subunit binds and stabilizes the catalytic subunit at 37 degrees Celsius and keeps it in circulation. Under some circumstances it may be an allosteric modifier of the catalytic subunit. This Homo sapiens (Human) protein is Carboxypeptidase N subunit 2 (CPN2).